A 112-amino-acid polypeptide reads, in one-letter code: Protein BEX5 (112 aa).

2 stretches are compositionally biased toward basic and acidic residues: residues 1–12 and 30–51; these read MEKDPKERREEE and PKPR…REDM. Positions 1–56 are disordered; that stretch reads MEKDPKERREEEQAPVQNEEACPMGGGEGPKPRENVRGDWDPPAQDFREDMPNGLV. The segment at 101 to 105 is his cluster; the sequence is HHDHH. Cysteine 109 contributes to the Zn(2+) binding site.

The protein belongs to the BEX family. In terms of processing, ubiquitinated. Degraded by the proteasome.

Its subcellular location is the cytoplasm. The polypeptide is Protein BEX5 (BEX5) (Bos taurus (Bovine)).